The following is a 520-amino-acid chain: Cytochrome P450 84A1 (520 aa).

The residue at position 1 (Met-1) is an N-acetylmethionine. The helical transmembrane segment at 12 to 32 (LSDPTTSLVIVVSLFIFISFI) threads the bilayer. Position 458 (Cys-458) interacts with heme.

Belongs to the cytochrome P450 family. Heme is required as a cofactor.

Its subcellular location is the membrane. It participates in aromatic compound metabolism; phenylpropanoid biosynthesis. The polypeptide is Cytochrome P450 84A1 (CYP84A1) (Arabidopsis thaliana (Mouse-ear cress)).